The sequence spans 857 residues: Protein sip-5 (857 aa).

6 disordered regions span residues 1-81 (MGNA…ARRL), 157-231 (GLPI…FKPT), 384-416 (SESS…APNV), 466-517 (FGRR…GNRR), 545-747 (KAEK…PMFN), and 763-857 (HAGK…QVTL). Composition is skewed to basic and acidic residues over residues 7–16 (KESRGDDSGR) and 36–48 (ESSR…RHDL). The span at 49-61 (TGLLGRAAGGSSS) shows a compositional bias: low complexity. Basic and acidic residues predominate over residues 62–81 (HADERHERKETKQEREARRL). Composition is skewed to polar residues over residues 179–191 (ASPT…TNHL) and 199–208 (SLSTASEHST). 3 stretches are compositionally biased toward low complexity: residues 209–230 (SNAG…PFKP), 384–394 (SESSVNSGSLS), and 476–504 (SASA…TANT). Residues 545–572 (KAEKEEQKEAKKREKEREKAEKKAEKAA) show a composition bias toward basic and acidic residues. 2 stretches are compositionally biased toward low complexity: residues 586–604 (SRSG…PGLS) and 621–645 (ASVA…ALAP). Basic and acidic residues predominate over residues 648-657 (STKDKGKAVD). The segment covering 688–697 (SSASSASSSA) has biased composition (low complexity). The span at 698–712 (VESNQGSYVPPSNLQ) shows a compositional bias: polar residues. Over residues 783–799 (ETAKSGEGAGEHVEHVL) the composition is skewed to basic and acidic residues. Composition is skewed to polar residues over residues 800-838 (DSQT…STAS) and 845-857 (NETT…QVTL).

Belongs to the SIP5 family.

Its subcellular location is the cytoplasm. Functionally, may negatively regulate the snf-1 kinase. In Neurospora crassa (strain ATCC 24698 / 74-OR23-1A / CBS 708.71 / DSM 1257 / FGSC 987), this protein is Protein sip-5 (sip-5).